The chain runs to 212 residues: Imidazole glycerol phosphate synthase subunit HisH (212 aa).

The Glutamine amidotransferase type-1 domain occupies 2-212; it reads KVAVIDYGMG…KNFLAWDGNV (211 aa). Residue Cys82 is the Nucleophile of the active site. Catalysis depends on residues His190 and Glu192.

Heterodimer of HisH and HisF.

The protein localises to the cytoplasm. It carries out the reaction 5-[(5-phospho-1-deoxy-D-ribulos-1-ylimino)methylamino]-1-(5-phospho-beta-D-ribosyl)imidazole-4-carboxamide + L-glutamine = D-erythro-1-(imidazol-4-yl)glycerol 3-phosphate + 5-amino-1-(5-phospho-beta-D-ribosyl)imidazole-4-carboxamide + L-glutamate + H(+). The enzyme catalyses L-glutamine + H2O = L-glutamate + NH4(+). It participates in amino-acid biosynthesis; L-histidine biosynthesis; L-histidine from 5-phospho-alpha-D-ribose 1-diphosphate: step 5/9. Functionally, IGPS catalyzes the conversion of PRFAR and glutamine to IGP, AICAR and glutamate. The HisH subunit catalyzes the hydrolysis of glutamine to glutamate and ammonia as part of the synthesis of IGP and AICAR. The resulting ammonia molecule is channeled to the active site of HisF. The polypeptide is Imidazole glycerol phosphate synthase subunit HisH (Chromobacterium violaceum (strain ATCC 12472 / DSM 30191 / JCM 1249 / CCUG 213 / NBRC 12614 / NCIMB 9131 / NCTC 9757 / MK)).